The sequence spans 446 residues: MRKHFGTDGIRGRANGIITPELALKVGQAAGVIFQRGDHRHRVVIGKDTRLSGYMIETALVAGFTSVGMDVLLLGPMPTPAVAMLTRSMRADIGVMISASHNPFEDNGIKLFGPDGFKLNDELELEIESLIDGDMRRRLAGSRDLGRAKRIESVHARYIEFAKRTLPRHVTLDGLRVVVDCANGAAYRVAPETLWELGAEVIAIGVEPDGFNINRDVGSTAPESLVQKVRELRADVGIALDGDADRVLIVDEKGQKVDGDQLMAAVARSWKEDERLTQPGLVATIMSNLGLERFINGLGLTLARTAVGDRYVLEHMREHGYNLGGEQSGHIIMSDYATTGDGLVAALQLLSVVKRRNLPVSEVCHCFEPLPQILKNVRFRSGEPLRADSVVTAIAHAKDRLGQSGRLVIRPSGTEPVIRVMAEGDDHALVAEVVDEVVDAVTRAAA.

S100 acts as the Phosphoserine intermediate in catalysis. 4 residues coordinate Mg(2+): S100, D241, D243, and D245. S100 carries the phosphoserine modification.

Belongs to the phosphohexose mutase family. Requires Mg(2+) as cofactor. In terms of processing, activated by phosphorylation.

The catalysed reaction is alpha-D-glucosamine 1-phosphate = D-glucosamine 6-phosphate. Catalyzes the conversion of glucosamine-6-phosphate to glucosamine-1-phosphate. The sequence is that of Phosphoglucosamine mutase from Methylorubrum populi (strain ATCC BAA-705 / NCIMB 13946 / BJ001) (Methylobacterium populi).